The chain runs to 235 residues: Ribonuclease PH (235 aa).

Residues Arg86 and 124-126 each bind phosphate; that span reads GTR.

This sequence belongs to the RNase PH family. In terms of assembly, homohexameric ring arranged as a trimer of dimers.

The catalysed reaction is tRNA(n+1) + phosphate = tRNA(n) + a ribonucleoside 5'-diphosphate. In terms of biological role, phosphorolytic 3'-5' exoribonuclease that plays an important role in tRNA 3'-end maturation. Removes nucleotide residues following the 3'-CCA terminus of tRNAs; can also add nucleotides to the ends of RNA molecules by using nucleoside diphosphates as substrates, but this may not be physiologically important. Probably plays a role in initiation of 16S rRNA degradation (leading to ribosome degradation) during starvation. The sequence is that of Ribonuclease PH from Francisella philomiragia subsp. philomiragia (strain ATCC 25017 / CCUG 19701 / FSC 153 / O#319-036).